A 179-amino-acid chain; its full sequence is Large ribosomal subunit protein uL6 (179 aa).

Belongs to the universal ribosomal protein uL6 family. Part of the 50S ribosomal subunit.

Functionally, this protein binds to the 23S rRNA, and is important in its secondary structure. It is located near the subunit interface in the base of the L7/L12 stalk, and near the tRNA binding site of the peptidyltransferase center. The protein is Large ribosomal subunit protein uL6 of Streptomyces avermitilis (strain ATCC 31267 / DSM 46492 / JCM 5070 / NBRC 14893 / NCIMB 12804 / NRRL 8165 / MA-4680).